The sequence spans 377 residues: Probable aspartic-type endopeptidase CTSD (377 aa).

In terms of domain architecture, Peptidase A1 spans 1 to 292 (SLIDTGASRT…DFDKNRVGLA (292 aa)). The active site involves Asp-4. A glycan (N-linked (GlcNAc...) asparagine) is linked at Asn-58. Asp-186 is an active-site residue. Residues 296–351 (YGETKDPPSSSHPPPAPTSNKASGGSPGLPEQSGTSSATTSTTGEPSSGSTASPSA) are disordered. The span at 328–351 (SGTSSATTSTTGEPSSGSTASPSA) shows a compositional bias: low complexity. Residue Ser-350 is the site of GPI-anchor amidated serine attachment. Residues 351-377 (AASSVSMSAWLSLAVFLSTASSLILWD) constitute a propeptide, removed in mature form.

This sequence belongs to the peptidase A1 family.

The protein localises to the cell membrane. Functionally, secreted aspartic-type endopeptidase which is secreted and contributes to virulence. The sequence is that of Probable aspartic-type endopeptidase CTSD (CTSD) from Arthroderma otae (strain ATCC MYA-4605 / CBS 113480) (Microsporum canis).